A 300-amino-acid chain; its full sequence is NADH-cytochrome b5 reductase 2 (300 aa).

The chain crosses the membrane as a helical span at residues F12 to Y29. The region spanning D49–E153 is the FAD-binding FR-type domain. An FAD-binding site is contributed by Q156 to L191.

It belongs to the flavoprotein pyridine nucleotide cytochrome reductase family. It depends on FAD as a cofactor.

The protein localises to the mitochondrion outer membrane. The catalysed reaction is 2 Fe(III)-[cytochrome b5] + NADH = 2 Fe(II)-[cytochrome b5] + NAD(+) + H(+). May mediate the reduction of outer membrane cytochrome b5. The sequence is that of NADH-cytochrome b5 reductase 2 (MCR1) from Lodderomyces elongisporus (strain ATCC 11503 / CBS 2605 / JCM 1781 / NBRC 1676 / NRRL YB-4239) (Yeast).